We begin with the raw amino-acid sequence, 94 residues long: Large ribosomal subunit protein uL23 (94 aa).

Belongs to the universal ribosomal protein uL23 family. In terms of assembly, part of the 50S ribosomal subunit. Contacts protein L29, and trigger factor when it is bound to the ribosome.

In terms of biological role, one of the early assembly proteins it binds 23S rRNA. One of the proteins that surrounds the polypeptide exit tunnel on the outside of the ribosome. Forms the main docking site for trigger factor binding to the ribosome. In Dehalococcoides mccartyi (strain ATCC BAA-2266 / KCTC 15142 / 195) (Dehalococcoides ethenogenes (strain 195)), this protein is Large ribosomal subunit protein uL23.